A 975-amino-acid chain; its full sequence is E3 ubiquitin-protein ligase BRE1A (975 aa).

The disordered stretch occupies residues Met-1–Leu-37. N6-acetyllysine is present on Lys-21. The residue at position 41 (Ser-41) is a Phosphoserine. The stretch at Thr-43–Leu-90 forms a coiled coil. The tract at residues Lys-125–Ala-155 is disordered. Residues Ser-136 and Ser-138 each carry the phosphoserine modification. Basic and acidic residues predominate over residues Asn-139 to Gly-151. Coiled coils occupy residues Glu-168–Val-375 and Ser-429–Lys-898. N6-acetyllysine occurs at positions 348 and 510. A disordered region spans residues Asp-507–Glu-622. A Phosphoserine modification is found at Ser-522. The span at Glu-527–Ser-540 shows a compositional bias: basic and acidic residues. A compositionally biased stretch (polar residues) spans Leu-543–Ala-552. Positions Asn-558–Glu-622 are enriched in basic and acidic residues. A Phosphoserine modification is found at Ser-562. The segment at Cys-922 to Asn-961 adopts an RING-type zinc-finger fold.

Belongs to the BRE1 family. In terms of assembly, component of the RNF20/40 complex (also known as BRE1 complex) probably composed of 2 copies of RNF20/BRE1A and 2 copies of RNF40/BRE1B. Interacts with UBE2E1/UBCH6. Interacts with p53/TP53 and WAC. Interacts with PAF1; the interaction mediates the association of the PAF1 and RNF20/40 complexes which is a prerequsite for recruitment of UBE2A/B. Interacts with PA2G4. Interacts with FBXL19.

It is found in the nucleus. The enzyme catalyses S-ubiquitinyl-[E2 ubiquitin-conjugating enzyme]-L-cysteine + [acceptor protein]-L-lysine = [E2 ubiquitin-conjugating enzyme]-L-cysteine + N(6)-ubiquitinyl-[acceptor protein]-L-lysine.. The protein operates within protein modification; protein ubiquitination. Component of the RNF20/40 E3 ubiquitin-protein ligase complex that mediates monoubiquitination of 'Lys-120' of histone H2B (H2BK120ub1). H2BK120ub1 gives a specific tag for epigenetic transcriptional activation and is also prerequisite for histone H3 'Lys-4' and 'Lys-79' methylation (H3K4me and H3K79me, respectively). It thereby plays a central role in histone code and gene regulation. The RNF20/40 complex forms a H2B ubiquitin ligase complex in cooperation with the E2 enzyme UBE2A or UBE2B; reports about the cooperation with UBE2E1/UBCH are contradictory. Required for transcriptional activation of Hox genes. Recruited to the MDM2 promoter, probably by being recruited by p53/TP53, and thereby acts as a transcriptional coactivator. Mediates the polyubiquitination of PA2G4 leading to its proteasome-mediated degradation. In Bos taurus (Bovine), this protein is E3 ubiquitin-protein ligase BRE1A (RNF20).